The sequence spans 363 residues: Peptide chain release factor 2 (363 aa).

N5-methylglutamine is present on Q251.

This sequence belongs to the prokaryotic/mitochondrial release factor family. Post-translationally, methylated by PrmC. Methylation increases the termination efficiency of RF2.

The protein localises to the cytoplasm. Its function is as follows. Peptide chain release factor 2 directs the termination of translation in response to the peptide chain termination codons UGA and UAA. The protein is Peptide chain release factor 2 of Helicobacter pylori (strain Shi470).